A 179-amino-acid polypeptide reads, in one-letter code: Large ribosomal subunit protein uL6 (179 aa).

It belongs to the universal ribosomal protein uL6 family. Part of the 50S ribosomal subunit.

In terms of biological role, this protein binds to the 23S rRNA, and is important in its secondary structure. It is located near the subunit interface in the base of the L7/L12 stalk, and near the tRNA binding site of the peptidyltransferase center. This is Large ribosomal subunit protein uL6 from Synechocystis sp. (strain ATCC 27184 / PCC 6803 / Kazusa).